Reading from the N-terminus, the 254-residue chain is uncharacterized protein (254 aa).

This is an uncharacterized protein from Acidianus filamentous virus 2 (isolate Italy/Pozzuoli) (AFV-2).